The chain runs to 207 residues: Holliday junction branch migration complex subunit RuvA (207 aa).

The tract at residues 1 to 65 is domain I; it reads MYDYIRGVLT…ETEHVLYGFH (65 aa). The tract at residues 66 to 144 is domain II; the sequence is TRGERECFRM…DLLPLDAQIL (79 aa). The tract at residues 145–155 is flexible linker; sequence ASWEPAKPSCM. A domain III region spans residues 155–207; it reads MEEGIQALAALGYPKSSAERMIAEAMSELPDHASVAEILPIALKKNLQGLNKI.

It belongs to the RuvA family. In terms of assembly, homotetramer. Forms an RuvA(8)-RuvB(12)-Holliday junction (HJ) complex. HJ DNA is sandwiched between 2 RuvA tetramers; dsDNA enters through RuvA and exits via RuvB. An RuvB hexamer assembles on each DNA strand where it exits the tetramer. Each RuvB hexamer is contacted by two RuvA subunits (via domain III) on 2 adjacent RuvB subunits; this complex drives branch migration. In the full resolvosome a probable DNA-RuvA(4)-RuvB(12)-RuvC(2) complex forms which resolves the HJ.

The protein resides in the cytoplasm. Functionally, the RuvA-RuvB-RuvC complex processes Holliday junction (HJ) DNA during genetic recombination and DNA repair, while the RuvA-RuvB complex plays an important role in the rescue of blocked DNA replication forks via replication fork reversal (RFR). RuvA specifically binds to HJ cruciform DNA, conferring on it an open structure. The RuvB hexamer acts as an ATP-dependent pump, pulling dsDNA into and through the RuvAB complex. HJ branch migration allows RuvC to scan DNA until it finds its consensus sequence, where it cleaves and resolves the cruciform DNA. The chain is Holliday junction branch migration complex subunit RuvA from Chlamydia abortus (strain DSM 27085 / S26/3) (Chlamydophila abortus).